A 370-amino-acid chain; its full sequence is Phospho-2-dehydro-3-deoxyheptonate aldolase, tyrosine-inhibited (370 aa).

Belongs to the class-I DAHP synthase family.

The enzyme catalyses D-erythrose 4-phosphate + phosphoenolpyruvate + H2O = 7-phospho-2-dehydro-3-deoxy-D-arabino-heptonate + phosphate. It participates in metabolic intermediate biosynthesis; chorismate biosynthesis; chorismate from D-erythrose 4-phosphate and phosphoenolpyruvate: step 1/7. Inhibited by tyrosine. Functionally, stereospecific condensation of phosphoenolpyruvate (PEP) and D-erythrose-4-phosphate (E4P) giving rise to 3-deoxy-D-arabino-heptulosonate-7-phosphate (DAHP). The polypeptide is Phospho-2-dehydro-3-deoxyheptonate aldolase, tyrosine-inhibited (ARO4) (Candida albicans (strain SC5314 / ATCC MYA-2876) (Yeast)).